Reading from the N-terminus, the 463-residue chain is MSTGTVVQVIGAVVDVEFPQDAVPQVYDALKITGEGSCNGLVLEVQQQLGGGVVRTIAMGTSDGLRRGLEVVNSGSPISVPVGTATLGRIMNVLGDPIDEAGAIGEEERYVIHRAAPSYEEQSNTTELLETGIKVIDLVCPFAKGGKVGLFGGAGVGKTVNMMELINNIAKAHSGLSVFAGVGERTREGNDFYYEMKDSGVLDKVAMVYGQMNEPPGNRLRVALTGLTMAEKFRDEGRDVLLFVDNIYRYTLAGTEVSALLGRMPSAVGYQPTLAEEMGVLQERITSTKTGSITSVQAVYVPADDLTDPSPATTFAHLDATVVLSRQIASLGIYPAVDPLDSTSRQLDPLVVGQEHYDVANGVQTVLQRYKELKDIIAILGMDELSDDDKMTVSRARKIERFLSQPFHVAEVFTGSPGKYVSLKDTIRGFKGILSGEFDHIPEQAFYMVGSIDEAVEKANKKK.

152 to 159 serves as a coordination point for ATP; the sequence is GGAGVGKT.

This sequence belongs to the ATPase alpha/beta chains family. F-type ATPases have 2 components, CF(1) - the catalytic core - and CF(0) - the membrane proton channel. CF(1) has five subunits: alpha(3), beta(3), gamma(1), delta(1), epsilon(1). CF(0) has three main subunits: a(1), b(2) and c(9-12). The alpha and beta chains form an alternating ring which encloses part of the gamma chain. CF(1) is attached to CF(0) by a central stalk formed by the gamma and epsilon chains, while a peripheral stalk is formed by the delta and b chains.

It is found in the cell inner membrane. The catalysed reaction is ATP + H2O + 4 H(+)(in) = ADP + phosphate + 5 H(+)(out). In terms of biological role, produces ATP from ADP in the presence of a proton gradient across the membrane. The catalytic sites are hosted primarily by the beta subunits. The chain is ATP synthase subunit beta from Shewanella oneidensis (strain ATCC 700550 / JCM 31522 / CIP 106686 / LMG 19005 / NCIMB 14063 / MR-1).